Here is a 591-residue protein sequence, read N- to C-terminus: Laccase (591 aa).

A signal peptide spans 1 to 20 (MPSFFRALFSGLIASQLSWA). 2 consecutive Plastocyanin-like domains span residues 66 to 189 (VRQY…IQID) and 198 to 356 (IDLG…HPTN). N-linked (GlcNAc...) asparagine glycosylation is present at N121. Residues H126, H128, H171, and H173 each coordinate Cu cation. 2 cysteine pairs are disulfide-bonded: C147–C571 and C332–C366. 4 N-linked (GlcNAc...) asparagine glycosylation sites follow: N234, N242, N265, and N323. N407 and N425 each carry an N-linked (GlcNAc...) asparagine glycan. In terms of domain architecture, Plastocyanin-like 3 spans 416–551 (GHPITQYVIN…AGLGNTFLEQ (136 aa)). Cu cation-binding residues include H463, H466, H468, H533, C534, H535, and H539.

It belongs to the multicopper oxidase family. Cu cation is required as a cofactor.

Its subcellular location is the secreted. It carries out the reaction 4 hydroquinone + O2 = 4 benzosemiquinone + 2 H2O. Functionally, lignin degradation and detoxification of lignin-derived products. This Cryphonectria parasitica (Chestnut blight fungus) protein is Laccase (LAC-1).